Here is a 311-residue protein sequence, read N- to C-terminus: MKNEKLPQFQPHFLAPKYWLFWLGVAIWRSILCLPYPILRHIGHGFGWLFSHLKVGERRAAIARRNLELCFPDMPENEREVILQENLRSVGMAIIETGMAWFWSDSRIKKWSKVEGLHYLKENQKDGIVLVGVHFLTLELGARIIGLHHPGIGVYRPNDNPLLDWLQTQGRLRSNKDMLDRKDLRGMIKALRHEETIWYAPDHDYGRKNAVFVPFFAVPDTCTTTGSYYLLKSSQNSKVIPFAPLRNKDGSGYTVSISAPVDFTDLQDETAIAARMNQIVEKEIMKDITIYMWLHRRFKTRPDEKTPSLYD.

Residues 19–39 (WLFWLGVAIWRSILCLPYPIL) form a helical membrane-spanning segment. An HXXXXD motif motif is present at residues 134-139 (HFLTLE).

It belongs to the LpxL/LpxM/LpxP family.

It localises to the cell inner membrane. The catalysed reaction is an alpha-Kdo-(2-&gt;4)-alpha-Kdo-(2-&gt;6)-lipid IVA + a fatty acyl-[ACP] = an alpha-Kdo-(2-&gt;4)-alpha-Kdo-(2-&gt;6)-(acyl)-lipid IVA + holo-[ACP]. The protein operates within glycolipid biosynthesis; KDO(2)-lipid A biosynthesis; KDO(2)-lipid A from CMP-3-deoxy-D-manno-octulosonate and lipid IV(A): step 3/4. It participates in bacterial outer membrane biogenesis; lipopolysaccharide biosynthesis. Its function is as follows. Catalyzes the transfer of an acyl chain from an acyl-[acyl-carrier-protein] (ACP) to a Kdo(2)-lipid IV(A) to form a Kdo(2)-(acyl)-lipid IV(A). The polypeptide is Lipid A biosynthesis acyltransferase (Haemophilus influenzae (strain ATCC 51907 / DSM 11121 / KW20 / Rd)).